The primary structure comprises 155 residues: Catabolic 3-dehydroquinase (155 aa).

Y24 functions as the Proton acceptor in the catalytic mechanism. Substrate-binding residues include N75, H81, and D88. The Proton donor role is filled by H101. Residues 102-103 and R112 each bind substrate; that span reads VS.

The protein belongs to the type-II 3-dehydroquinase family. In terms of assembly, homododecamer. Adopts a ring-like structure, composed of an arrangement of two hexameric rings stacked on top of one another.

The enzyme catalyses 3-dehydroquinate = 3-dehydroshikimate + H2O. The protein operates within aromatic compound metabolism; 3,4-dihydroxybenzoate biosynthesis; 3,4-dihydroxybenzoate from 3-dehydroquinate: step 1/2. Is involved in the catabolism of quinate. Allows the utilization of quinate as carbon source via the beta-ketoadipate pathway. This chain is Catabolic 3-dehydroquinase, found in Penicillium rubens (strain ATCC 28089 / DSM 1075 / NRRL 1951 / Wisconsin 54-1255) (Penicillium chrysogenum).